The following is a 394-amino-acid chain: Elongation factor Tu (394 aa).

In terms of domain architecture, tr-type G spans 10 to 204 (KPHVNVGTIG…ALDSYIPTPE (195 aa)). The segment at 19–26 (GHVDHGKT) is G1. A GTP-binding site is contributed by 19–26 (GHVDHGKT). Threonine 26 is a binding site for Mg(2+). A G2 region spans residues 60-64 (GITIN). A G3 region spans residues 81 to 84 (DCPG). Residues 81-85 (DCPGH) and 136-139 (NKCD) contribute to the GTP site. Residues 136-139 (NKCD) are G4. The interval 174–176 (SAL) is G5.

It belongs to the TRAFAC class translation factor GTPase superfamily. Classic translation factor GTPase family. EF-Tu/EF-1A subfamily. As to quaternary structure, monomer.

It localises to the cytoplasm. The catalysed reaction is GTP + H2O = GDP + phosphate + H(+). Functionally, GTP hydrolase that promotes the GTP-dependent binding of aminoacyl-tRNA to the A-site of ribosomes during protein biosynthesis. In Neisseria gonorrhoeae (strain ATCC 700825 / FA 1090), this protein is Elongation factor Tu.